A 266-amino-acid chain; its full sequence is Undecaprenyl-diphosphatase (266 aa).

7 consecutive transmembrane segments (helical) span residues 41-61 (NLAFTIVVHVATVFSTLVILW), 82-102 (YVINILISMLPIGIVGVFFKD), 106-126 (AIFGSGLLIVGCMLLLTAALL), 140-160 (ISMKDAFIIGLAQACAVLPGL), 180-200 (LAQFSFLMVIPPILGEALLDG), 213-233 (IPTLSLIVGFIAAFVSGCLAC), and 245-265 (LIYFAIYCAIVGVVTIVVSQL).

This sequence belongs to the UppP family.

The protein localises to the cell inner membrane. It carries out the reaction di-trans,octa-cis-undecaprenyl diphosphate + H2O = di-trans,octa-cis-undecaprenyl phosphate + phosphate + H(+). Functionally, catalyzes the dephosphorylation of undecaprenyl diphosphate (UPP). Confers resistance to bacitracin. The sequence is that of Undecaprenyl-diphosphatase from Bacteroides fragilis (strain YCH46).